We begin with the raw amino-acid sequence, 156 residues long: SsrA-binding protein (156 aa).

Belongs to the SmpB family.

It is found in the cytoplasm. Its function is as follows. Required for rescue of stalled ribosomes mediated by trans-translation. Binds to transfer-messenger RNA (tmRNA), required for stable association of tmRNA with ribosomes. tmRNA and SmpB together mimic tRNA shape, replacing the anticodon stem-loop with SmpB. tmRNA is encoded by the ssrA gene; the 2 termini fold to resemble tRNA(Ala) and it encodes a 'tag peptide', a short internal open reading frame. During trans-translation Ala-aminoacylated tmRNA acts like a tRNA, entering the A-site of stalled ribosomes, displacing the stalled mRNA. The ribosome then switches to translate the ORF on the tmRNA; the nascent peptide is terminated with the 'tag peptide' encoded by the tmRNA and targeted for degradation. The ribosome is freed to recommence translation, which seems to be the essential function of trans-translation. In Staphylococcus haemolyticus (strain JCSC1435), this protein is SsrA-binding protein.